Here is a 175-residue protein sequence, read N- to C-terminus: ATP synthase subunit b (175 aa).

A helical membrane pass occupies residues 23–43 (TGITFLVLLFVLGKFAWGPIV).

It belongs to the ATPase B chain family. As to quaternary structure, F-type ATPases have 2 components, F(1) - the catalytic core - and F(0) - the membrane proton channel. F(1) has five subunits: alpha(3), beta(3), gamma(1), delta(1), epsilon(1). F(0) has three main subunits: a(1), b(2) and c(10-14). The alpha and beta chains form an alternating ring which encloses part of the gamma chain. F(1) is attached to F(0) by a central stalk formed by the gamma and epsilon chains, while a peripheral stalk is formed by the delta and b chains.

Its subcellular location is the cell inner membrane. Its function is as follows. F(1)F(0) ATP synthase produces ATP from ADP in the presence of a proton or sodium gradient. F-type ATPases consist of two structural domains, F(1) containing the extramembraneous catalytic core and F(0) containing the membrane proton channel, linked together by a central stalk and a peripheral stalk. During catalysis, ATP synthesis in the catalytic domain of F(1) is coupled via a rotary mechanism of the central stalk subunits to proton translocation. Component of the F(0) channel, it forms part of the peripheral stalk, linking F(1) to F(0). The chain is ATP synthase subunit b from Anaeromyxobacter sp. (strain Fw109-5).